Consider the following 388-residue polypeptide: Phosphoglycerate kinase (388 aa).

Substrate-binding positions include 21 to 23 (DLN), arginine 36, 59 to 62 (HLGR), arginine 114, and arginine 147. Residues lysine 198, glutamate 315, and 341 to 344 (GGDT) contribute to the ATP site.

The protein belongs to the phosphoglycerate kinase family. As to quaternary structure, monomer.

Its subcellular location is the cytoplasm. The enzyme catalyses (2R)-3-phosphoglycerate + ATP = (2R)-3-phospho-glyceroyl phosphate + ADP. Its pathway is carbohydrate degradation; glycolysis; pyruvate from D-glyceraldehyde 3-phosphate: step 2/5. The protein is Phosphoglycerate kinase of Buchnera aphidicola subsp. Schizaphis graminum (strain Sg).